Here is a 2869-residue protein sequence, read N- to C-terminus: MNINRNNINDSNRHSTSFNDNFDSFGNQNGFINNNSNNNNNNKNNNNNKNNNNNNNNNDYNNNNNRSSNNGDNCNNNNINKNNYNNNYNNNNSFDNNNFNNNNNKGFNDSNNNNHTNNNINPKNNFDRSSNKGFGPLNDNFILSPIKNIFRGDFCNESIVLKPIKENIKINNNNNNNKDNNNSNFNNNNTNNDNNNNNNNNNNNNNNNNNNNNNNNNNNNNNNNNNINNNNYDYNNNTNFNNNNTNNNNNYNNYNNNNNNNNNTNFNNNTNNTNNKNKNNSNNTTNNTNNYNKNNNNNNNNNKNNNNNNNNNNNNNNNNNNNNNNSNNNNNNNINNKNNNNLNNYDNYRCNYQNSRIPNSACSTPLSSISPTQQETFLKFNESGGGLNNNTNFNNQTFGNNNKNQNNDNNLNNNDNDKNNYYDNQYNSNIDNIGNSDDSIGGQTNKNKNKNKNKNNNNNNNNNNNNNNNNNNNNNSNNDQKTSSSLDTMIDENWDQHKEKHNKKHENGDISESKPKKKIKSKYDLNIENSLKILTNFNNLNEKVEDVIQMDPVEKEFQNDLRIYSIVREISVSELETKSNNELIDISRILGLPVHKNHRSEIFFKLFNYLNFFKKKMEKKIEQRGLELKDILINSRPSEYNDYSFQNQKKQKTEQREHKDILANRIQNQIQEQVQNQIQFLIQNYNQNQNQNQKQNQNQNQKNQNHQPQPPLQPQRQRYFPQDKPQNQNNQPPLQHQHQYQYQYQNQDQYQDHDHEHEHDHDQNQNQNQNQHQSRNQNQDQYQDHDHEHEHDHDQNQNQNQYQSQNQQNQNQNQNQNLIQIQNHNRDIANYSLSNRDSNSRNEDNSCDFNYNSSCNNININNNNNNNNNNNNNNNNYYNYNQNQNQNQSQNHNRGILDNRINSNNSLSSRDSNGRNRDNSCDFNNYKKSSNNSNSNNNNNINNNNNNNNNNNNNNNNNNNKNNNNNNNNKNNNSNNNSYTCNNNSNNSFNNLSSIDRGYNNHNTNPNNPNNNPNNPNNNPNNPNNPNNPNNNTSNTSNTSNTNNTNNTNNTNTSNYNSNNSNSNNSNSDNINSNNINTNINTNINSNTNSNSNTNNINNINSNNINNINNINSNNNNNNPNPNTNSNNINTASNDSNSNNINTNSNNINPNINSDSNNNFNNNNNSNNNNINSNSNIFNNINSSIDRSNSNGFNNNNSNDQRNIDSSSNSDIVDVDSDDDSSGVFIVDDTSSNKSNRASSVKTLGTSSLAIKHEYDSRNKSSLNFFSDQTTLEDGNTSFDEKVLYIKRVLINDFRSKNHIVDMGKAIGIDVPPKDTKANVLTLMIAFVNDYLDQKKKRLESNSSWDPNGGNYIDHNEFFKTPTPGQRQVYNDDINDDNGNNNNNNSNNNINTNNNININTNINTNTNNNTNNNTNINTNANTNTNTYSNTNINNNTNTNSNGFNGNNIDNGSLNNNNFNNNSNNIDNGSLNNSNNIDNCSLNNNSNNNNNSNSNSNSNNNNNNNNYYNNNNNNNNNYNNYNGSYNCNNNNNSYYYNNNSSNNNNNSYNNNNNYYNSNNNNNNNNNNNNNNNNNNNNNNNNNNNNNNNNRYDCNNNNNYSNNNSNSNSNNNSNYSNNSYDCNNDNNNNIFSNSNGHNDNDIGNDFDNDNDNDSYIDDDNNVYDNNDGDYNNNKNNNYNNNNNNNNNNNNSNNNNNNNNNNRSNYYGNEDNNINCIDTNGNGNGNIYSCSNSNSNSYSNSNSNSNSNSNSNSNNNSNNSNNSNNSNSNSNNNINNNNINNNNTNNNNNNNSYICNNNNNNNNNNNNKNNNNNNNNNNNNNNNNNSLYGKDNEGFSNQINDNFNFYKSQGNNILEDFNLNNFQTNDKILKEMIDKLNNYGISIKPKIGKGNSQMIVNEGERENKERLFWSVFRDKSLLDKIVSYLAECIQGKPKLTSFKYYNIVHIKWMLDNDYIELIQDKVFRNETLLFGAYKSEDMTKEEVVSILFKKVNQKNCKNSEEIEKQLKFYQLLVHRFGNEIFKGINGGIQGLLELAITAKNSIALIVLFSMIESNYTLTDEILLNSFKCTIKVNSFSMIKLITFKIIKKDYQIIRNYQEVTNTTFEQIFQSIINPSIKIINFLIDIGIVMFSFKRDDSPPICFDSILVKSNSNTLASEISTRKKNLRFVKEYKTIIGESGFINSNCGVISIEMDKHEPHPSRPSIFNKNSLKEIINACYLNINFNYDKNSPLLKRQIETLFLFYPVFYSTVEVISIITNRIEAVRNCFSKEQLSLKLKHLIKIYPEDSIQFKGINCLVSFYLSFDFQSKFYCLYLHYLIFGNFISNINSDVLNVLPKDFDLNYFEKSLKYGSSIYCAKFKNEIARNFPKLVKDKKFFILFKHCDKNSVASRYKKLEFFRTIINQQSHSTERCNFALFCLLISTNDLELIEAACNEFTVFKEGFSYDFRDKQSNLYKYCNQMYFKVKITIIDFIKTVEVSHFTLQNYLYLFKDFEKDFQVKHFKSSEVFIHYCQTFLSNYRGNNGQLVFIDTHVGDNMDLKSYNSFWNIVAFLIRNPLNINFKIIDPYTLFFNITLKISNINVDNNNNSAVMNSNQRDYEIFNNIFENIKYVITNYQPNGYIVYYKPSSLFGGDLYWCNKLIDWIFDNAKDDIINKRCKIEESDLIKCGKFNYLFYERGYYYFDSIRNRYLPFSGHPILDSGRLGNINLLHLFLNTSGLQIFEKEANREDRVRKQKGKKDKESSSSGSSIGNPSSSGGSDFYNLDDSENESDSENNNEIEDDMKSIYRFKEDFTSILMNASRYGRLNIFQYLYFNYPFLVSKRSWIAADNLVSKATRFGLLQNTTFQNIGKTAEDNGKSSYSLNFLINFILRFL.

The span at 1-10 (MNINRNNIND) shows a compositional bias: low complexity. 13 disordered regions span residues 1–132 (MNIN…SSNK), 171–349 (NNNN…DNYR), 380–485 (FNES…TSSS), 498–517 (KEKH…KPKK), 690–812 (NQNQ…NQNQ), 860–1074 (INNN…INSN), 1108–1175 (INNI…NSNS), 1188–1216 (SNSN…VDVD), 1224–1243 (VFIV…SVKT), 1340–1448 (ESNS…GNNI), 1476–1704 (IDNC…SNYY), 1731–1832 (NSNS…NEGF), and 2725–2773 (DRVR…NNNE). A compositionally biased stretch (polar residues) spans 14–25 (HSTSFNDNFDSF). Composition is skewed to low complexity over residues 26-124 (GNQN…NPKN), 171-348 (NNNN…YDNY), 388-414 (NNNT…LNNN), 421-446 (YYDN…QTNK), and 454-478 (KNNN…NSNN). Positions 505–514 (HENGDISESK) are enriched in basic and acidic residues. Low complexity-rich tracts occupy residues 690–707 (NQNQ…QNHQ) and 714–749 (PQRQ…NQDQ). A compositionally biased stretch (basic and acidic residues) spans 750 to 763 (YQDHDHEHEHDHDQ). Low complexity predominate over residues 764 to 781 (NQNQNQNQHQSRNQNQDQ). The span at 782–795 (YQDHDHEHEHDHDQ) shows a compositional bias: basic and acidic residues. 5 stretches are compositionally biased toward low complexity: residues 796–812 (NQNQ…NQNQ), 860–891 (INNN…QSQN), 898–911 (DNRI…SSRD), 921–991 (CDFN…SFNN), and 1000–1074 (NNHN…INSN). Residues 1188–1212 (SNSNGFNNNNSNDQRNIDSSSNSDI) are compositionally biased toward low complexity. The segment covering 1230 to 1243 (TSSNKSNRASSVKT) has biased composition (polar residues). 2 stretches are compositionally biased toward low complexity: residues 1377–1448 (DNGN…GNNI) and 1476–1639 (IDNC…NDND). A compositionally biased stretch (acidic residues) spans 1640–1659 (IGNDFDNDNDNDSYIDDDNN). 3 stretches are compositionally biased toward low complexity: residues 1660-1704 (VYDN…SNYY), 1731-1823 (NSNS…NNNS), and 2739-2754 (SSSG…SGGS). Residues 2758 to 2773 (NLDDSENESDSENNNE) are compositionally biased toward acidic residues.

This is an uncharacterized protein from Dictyostelium discoideum (Social amoeba).